The following is an 83-amino-acid chain: Cytochrome b559 subunit alpha (83 aa).

Residues 21-35 (VIHSITIPSLFIAGW) form a helical membrane-spanning segment. Heme is bound at residue His-23.

It belongs to the PsbE/PsbF family. As to quaternary structure, heterodimer of an alpha subunit and a beta subunit. PSII is composed of 1 copy each of membrane proteins PsbA, PsbB, PsbC, PsbD, PsbE, PsbF, PsbH, PsbI, PsbJ, PsbK, PsbL, PsbM, PsbT, PsbX, PsbY, PsbZ, Psb30/Ycf12, at least 3 peripheral proteins of the oxygen-evolving complex and a large number of cofactors. It forms dimeric complexes. Requires heme b as cofactor.

Its subcellular location is the plastid. It is found in the chloroplast thylakoid membrane. Its function is as follows. This b-type cytochrome is tightly associated with the reaction center of photosystem II (PSII). PSII is a light-driven water:plastoquinone oxidoreductase that uses light energy to abstract electrons from H(2)O, generating O(2) and a proton gradient subsequently used for ATP formation. It consists of a core antenna complex that captures photons, and an electron transfer chain that converts photonic excitation into a charge separation. The polypeptide is Cytochrome b559 subunit alpha (Staurastrum punctulatum (Green alga)).